A 1159-amino-acid polypeptide reads, in one-letter code: Calcium-activated potassium channel subunit alpha-1 (1159 aa).

Topologically, residues 1 to 24 (EPNMDALIIPVTMEVPCDSRGQRM) are extracellular. Residues 25 to 45 (WWAFLASSMVTFFGGLFIILL) traverse the membrane as a helical segment. Over 46 to 116 (WRTLKYLWTV…MISAQTLTGR (71 aa)) the chain is Cytoplasmic. Residues C56, C57, and C59 are each lipidated (S-palmitoyl cysteine). The chain crosses the membrane as a helical span at residues 117 to 137 (VLVVLVFALSIGALVIYFIDS). Topologically, residues 138–152 (SNPIESCQNFYKDFT) are extracellular. The helical transmembrane segment at 153-173 (LQIDMAFNVFFLLYFGLRFIA) threads the bilayer. Topologically, residues 174–177 (ANDN) are cytoplasmic. Residues 178 to 198 (LWFWLEVNSVVDFFTVPPVFV) traverse the membrane as a helical segment. At 199-202 (SVYL) the chain is on the extracellular side. Residues 203-223 (NRSWLGLRFLRALRLIQFSEI) form a helical; Voltage-sensor membrane-spanning segment. Topologically, residues 224 to 238 (LQFLNILKTSNSIKL) are cytoplasmic. A helical transmembrane segment spans residues 239-259 (VNLLSIFISTWLTAAGFIHLV). Over 260-273 (ENSGDPWENFQNSQ) the chain is Extracellular. Residues 274–296 (ALTYWECVYLLMVTMSTVGYGDV) constitute an intramembrane region (pore-forming). Residues 290-293 (TVGY) carry the Selectivity for potassium motif. At 297-305 (YAKTTPGGL) the chain is on the extracellular side. Residues 306-326 (FIVFFILGGLAMFASYVPEII) traverse the membrane as a helical segment. Residues 327–1159 (EIIGNRKKYG…PPIREVEDEC (833 aa)) are Cytoplasmic-facing. The RCK N-terminal 1 domain occupies 345-487 (RKHIVVCGHI…WNWKEGDDAI (143 aa)). The Mg(2+) site is built by E377, Q400, and E402. The segment S7 stretch occupies residues 494 to 514 (LGFIAQSCLAQGLSTMLANLF). Residues 551-571 (LSFPTVCELCFVKLKLLMIAI) form a segment S8 region. The heme-binding motif stretch occupies residues 615-619 (CKACH). The interval 639–668 (EQPSTLSPKKKQRNGGMRNSPSSSPKLMRH) is disordered. A Phosphothreonine modification is found at T643. Phosphoserine is present on residues S645, S658, and S662. The segment S9 stretch occupies residues 717–737 (VLSGHVVVCIFGHVSSALIGL). Residues 719–863 (SGHVVVCIFG…MDKSSPDNSP (145 aa)) form the RCK N-terminal 2 domain. Phosphothreonine is present on T850. Phosphoserine is present on residues S858 and S862. The Calcium bowl motif lies at 883–905 (TELVNDTNVQFLDQDDDDDPDTE). Ca(2+) contacts are provided by Q892, D895, D898, and D900. A segment S10 region spans residues 912-932 (FACGTAFAVSVLDSLMSATYF). The segment covering 1066–1091 (RASLSHSSHSSQSSSKKSSSVHSIPS) has biased composition (low complexity). The disordered stretch occupies residues 1066–1124 (RASLSHSSHSSQSSSKKSSSVHSIPSTANRQNRPKSRESRDKQTEKKWFTDEPDNAYPR). A compositionally biased stretch (basic and acidic residues) spans 1100–1115 (KSRESRDKQTEKKWFT). S1101 and S1104 each carry phosphoserine.

The protein belongs to the potassium channel family. Calcium-activated (TC 1.A.1.3) subfamily. KCa1.1/KCNMA1 sub-subfamily. In terms of assembly, homotetramer; which constitutes the calcium-activated potassium channel. Interacts with beta subunits KCNMB1, KCNMB2, KCNMB3 and KCNMB4. Interacts with gamma subunits LRRC26, LRRC38, LRRC52 and LRRC55. Beta and gamma subunits are accessory, and modulate its activity. Interacts with RAB11B. Phosphorylated. Phosphorylation by kinases such as PKA and/or PKG. In smooth muscles, phosphorylation affects its activity. In terms of processing, palmitoylation by ZDHHC22 and ZDHHC23 within the intracellular linker between the S0 and S1 transmembrane domains regulates localization to the plasma membrane. Depalmitoylated by LYPLA1 and LYPLAL1, leading to retard exit from the trans-Golgi network. Expressed in all vascular and smooth muscles.

Its subcellular location is the cell membrane. The enzyme catalyses K(+)(in) = K(+)(out). Ethanol and carbon monoxide-bound heme increase channel activation. Heme inhibits channel activation. Potassium channel activated by both membrane depolarization or increase in cytosolic Ca(2+) that mediates export of K(+). It is also activated by the concentration of cytosolic Mg(2+). Its activation dampens the excitatory events that elevate the cytosolic Ca(2+) concentration and/or depolarize the cell membrane. It therefore contributes to repolarization of the membrane potential. Plays a key role in controlling excitability in a number of systems, such as regulation of the contraction of smooth muscle, the tuning of hair cells in the cochlea, regulation of transmitter release, and innate immunity. In smooth muscles, its activation by high level of Ca(2+), caused by ryanodine receptors in the sarcoplasmic reticulum, regulates the membrane potential. In cochlea cells, its number and kinetic properties partly determine the characteristic frequency of each hair cell and thereby helps to establish a tonotopic map. Kinetics of KCNMA1 channels are determined by alternative splicing, phosphorylation status and its combination with modulating beta subunits. Highly sensitive to both iberiotoxin (IbTx) and charybdotoxin (CTX). In Canis lupus familiaris (Dog), this protein is Calcium-activated potassium channel subunit alpha-1 (KCNMA1).